A 269-amino-acid chain; its full sequence is Ethylene-responsive transcription factor ERN1 (269 aa).

Over residues 1-15 (MEIQFQQPNLQQHQK) the composition is skewed to polar residues. Disordered stretches follow at residues 1–36 (MEIQ…NKFV) and 128–157 (DVPA…LSSG). Residues 34–91 (KFVGVRQRPSGRWVAEIKDTTQKIRMWLGTFETAEEAARAYDEAACLLRGSNTRTNFI) constitute a DNA-binding region (AP2/ERF). Over residues 128–146 (DVPAPSASTTSTSSNTSNS) the composition is skewed to low complexity.

Belongs to the AP2/ERF transcription factor family. ERF subfamily.

It is found in the nucleus. In terms of biological role, transcription factor involved in the symbiotic nodule signaling pathway in response to rhizobial stimulation. Functions as a transcriptional regulator required for root infection by symbiotic rhizobia, infection thread (IT) formation, and nodule development. May coordinate these processes. Functions downstream of the CCAMK-CYCLOPS complex. Probably not involved in arbuscular mycorrhizal (AM) symbiosis. This Lotus japonicus (Lotus corniculatus var. japonicus) protein is Ethylene-responsive transcription factor ERN1.